We begin with the raw amino-acid sequence, 265 residues long: RNA polymerase sigma factor SigI2 (265 aa).

Positions 71–84 (DEFSVGLAAFNEAI) match the Polymerase core binding motif. Positions 211–230 (KTELLKLLKINKKTIERNRT) form a DNA-binding region, H-T-H motif.

It belongs to the sigma-70 factor family. SigI subfamily. In terms of assembly, interacts with RsgI2.

It localises to the cytoplasm. Its activity is regulated as follows. Negatively regulated by the anti-sigma-I factor RsgI2. Binding of the polysaccharide substrate to RsgI2 may lead to the release and activation of SigI2. Sigma factors are initiation factors that promote the attachment of RNA polymerase to specific initiation sites and are then released. This sigma factor is involved in regulation of cellulosomal genes via an external polysaccharide-sensing mechanism. This chain is RNA polymerase sigma factor SigI2, found in Acetivibrio thermocellus (strain ATCC 27405 / DSM 1237 / JCM 9322 / NBRC 103400 / NCIMB 10682 / NRRL B-4536 / VPI 7372) (Clostridium thermocellum).